The primary structure comprises 66 residues: Large ribosomal subunit protein bL35 (66 aa).

It belongs to the bacterial ribosomal protein bL35 family.

The polypeptide is Large ribosomal subunit protein bL35 (Ruegeria sp. (strain TM1040) (Silicibacter sp.)).